Here is a 248-residue protein sequence, read N- to C-terminus: Gamma-glutamyl peptidase 2 (248 aa).

A Glutamine amidotransferase type-1 domain is found at 17–212 (SEFVKEMYGG…IDRVHKIKFV (196 aa)). The Nucleophile role is filled by cysteine 101. Catalysis depends on residues histidine 191 and glutamate 193.

This sequence belongs to the peptidase C26 family.

It localises to the cytoplasm. The protein localises to the cytosol. The enzyme catalyses an S-[(1E)-1-(hydroxyimino)-omega-(methylsulfanyl)alkyl]-L-glutathione + H2O = an S-[(1E)-1-(hydroxyimino)-omega-(methylsulfanyl)alkyl]-L-cysteinylglycine + L-glutamate. It catalyses the reaction (E)-1-(glutathione-S-yl)-2-(1H-indol-3-yl)acetohydroximate + H2O = (E)-1-(glycyl-L-cystein-S-yl)-2-(1H-indol-3-yl)acetohydroximate + L-glutamate. The catalysed reaction is 2-(glutathion-S-yl)-2-(1H-indol-3-yl)acetonitrile + H2O = 2-(glycyl-L-cystein-S-yl)-2-(1H-indol-3-yl)acetonitrile + L-glutamate. It carries out the reaction (Z)-1-(glutathione-S-yl)-2-phenylacetohydroximate + H2O = (Z)-1-(glycyl-L-cystein-S-yl)-2-phenylacetohydroximate + L-glutamate. The protein operates within secondary metabolite biosynthesis. Involved in glucosinolate biosynthesis. Hydrolyzes the gamma-glutamyl peptide bond of several glutathione (GSH) conjugates to produce Cys-Gly conjugates related to glucosinolates. The gamma-Glu-Cys-Gly-GSH conjugates are the sulfur-donating molecule in glucosinolate biosynthesis. The chain is Gamma-glutamyl peptidase 2 from Arabidopsis thaliana (Mouse-ear cress).